The following is a 216-amino-acid chain: MPWIVGVSGASGTPYAAAVLRALLAAGESVDLVVSRASRLTLLDETGISFRDAHWRHDLREWLARGADGKPDTFDADVSGVRHWSAGDLAAGPSSGSYPTKGMLIVPASTACVAGVALGLSKDLLQRAASVTLKERRRLVVAVRETPLDGRTLRHLVTLDDAGASVVPASPAFYAGATHIQDLVDFVAGRVLDAAGVGHGLYRRWRGDLGGARPTG.

Residues 9–11 (GAS), serine 35, and arginine 144 contribute to the FMN site. The dimethylallyl phosphate site is built by tyrosine 174 and arginine 190.

Belongs to the UbiX/PAD1 family.

It catalyses the reaction dimethylallyl phosphate + FMNH2 = prenylated FMNH2 + phosphate. Functionally, flavin prenyltransferase that catalyzes the synthesis of the prenylated FMN cofactor (prenyl-FMN) for 4-hydroxy-3-polyprenylbenzoic acid decarboxylase UbiD. The prenyltransferase is metal-independent and links a dimethylallyl moiety from dimethylallyl monophosphate (DMAP) to the flavin N5 and C6 atoms of FMN. The chain is Flavin prenyltransferase UbiX from Streptomyces coelicolor (strain ATCC BAA-471 / A3(2) / M145).